Reading from the N-terminus, the 417-residue chain is Snake venom metalloproteinase aculysin-1 (417 aa).

The signal sequence occupies residues 1 to 20 (MIQVLLVTICLAAFPYQGSS). A propeptide spanning residues 21–189 (IMLESGKVND…KKPSWLNLTP (169 aa)) is cleaved from the precursor. Positions 197 to 392 (TSVNLQLIVD…KKPKCIHKKS (196 aa)) constitute a Peptidase M12B domain. Disulfide bonds link Cys-308–Cys-387, Cys-349–Cys-371, and Cys-351–Cys-354. His-333 contacts Zn(2+). Residue Glu-334 is part of the active site. Residues His-337 and His-343 each coordinate Zn(2+). Residues 393-417 (LKTDTVSTSVSGNEPLDDNVDGFHA) constitute a propeptide that is removed on maturation. A disordered region spans residues 398–417 (VSTSVSGNEPLDDNVDGFHA). A compositionally biased stretch (acidic residues) spans 407-417 (PLDDNVDGFHA).

This sequence belongs to the venom metalloproteinase (M12B) family. P-I subfamily. As to quaternary structure, monomer. Zn(2+) is required as a cofactor. In terms of tissue distribution, expressed by the venom gland.

The protein localises to the secreted. Functionally, this protein is an alkaline zinc metalloprotease from snake venom that possesses weak hemorrhagic activity. The sequence is that of Snake venom metalloproteinase aculysin-1 from Deinagkistrodon acutus (Hundred-pace snake).